A 529-amino-acid chain; its full sequence is Phosphoenolpyruvate carboxykinase (ATP) (529 aa).

R52 is a binding site for substrate. Residues R130, N131, and F133 each coordinate Ca(2+). Y191 and K197 together coordinate substrate. ATP contacts are provided by residues K197, H216, and 232-240; that span reads GLSGTGKTT. Mn(2+) is bound by residues K197 and H216. Mn(2+) is bound at residue D253. Ca(2+) is bound at residue G267. ATP is bound by residues E281, R319, 438–439, F439, and T444; that span reads RF. A substrate-binding site is contributed by R319.

Belongs to the phosphoenolpyruvate carboxykinase (ATP) family. Dimer of dimers. Mn(2+) serves as cofactor.

Its subcellular location is the cytoplasm. The catalysed reaction is oxaloacetate + ATP = phosphoenolpyruvate + ADP + CO2. Its pathway is carbohydrate biosynthesis; gluconeogenesis. Its activity is regulated as follows. Allosterically activated by calcium. Its function is as follows. Involved in gluconeogenesis. Catalyzes the conversion of oxaloacetate (OAA) to phosphoenolpyruvate (PEP) through direct phosphoryl transfer between the nucleoside triphosphate and OAA. The polypeptide is Phosphoenolpyruvate carboxykinase (ATP) (Thermus thermophilus (strain ATCC 27634 / DSM 579 / HB8)).